The sequence spans 221 residues: Glutathione S-transferase class-mu 26 kDa isozyme 1 (221 aa).

The 81-residue stretch at 2–82 (PAKLGYWKIR…YIADKHGMIG (81 aa)) folds into the GST N-terminal domain. Glutathione is bound by residues 7–8 (YW), 40–44 (WFSKK), 53–54 (NL), and 66–67 (QS). One can recognise a GST C-terminal domain in the interval 84-202 (TPEERARVSM…ESNRFIKWPL (119 aa)). Y110 lines the substrate pocket.

Belongs to the GST superfamily. Mu family. Homodimer.

The enzyme catalyses RX + glutathione = an S-substituted glutathione + a halide anion + H(+). Functionally, conjugation of reduced glutathione to a wide number of exogenous and endogenous hydrophobic electrophiles. Its function is as follows. GST isoenzymes appear to play a central role in the parasite detoxification system. Other functions are also suspected including a role in increasing the solubility of haematin in the parasite gut. In Fasciola hepatica (Liver fluke), this protein is Glutathione S-transferase class-mu 26 kDa isozyme 1.